The chain runs to 276 residues: MIVIGRSIVHPYITNEYEPFAAEKQQILSIMAGNQEIYSFRTSDELSFDLNLRVNIITSALELFQSGFQFRTFQQSFCNPQYWKRTSLGGFELLPNIPPSIAIQDIFKNGKLYGTECATAMIIIFYKALLSLYEKETFNRLFANLLLYTWDYDQDLKLITKTGGDLVPGDLVYFKNPQVNPATIEWQGENTIYLGNFFFYGHGVGVKTKEEIIYALNERRVPYAFISAFLTDTITRIDSRLMSYHASPSTPQTSIGFIPIRDDAIVATVGNTTTVY.

It belongs to the bacillus TGase family.

The enzyme catalyses L-glutaminyl-[protein] + L-lysyl-[protein] = [protein]-L-lysyl-N(6)-5-L-glutamyl-[protein] + NH4(+). Its function is as follows. Probably plays a role in the assembly of the spore coat proteins by catalyzing epsilon-(gamma-glutamyl)lysine cross-links. The sequence is that of Protein-glutamine gamma-glutamyltransferase from Bacillus anthracis (strain A0248).